The following is a 291-amino-acid chain: NAD kinase (291 aa).

The active-site Proton acceptor is Asp73. Residues 73 to 74, 147 to 148, Arg175, Asp177, 188 to 193, Ala212, and Gln246 each bind NAD(+); these read DG, ND, and TAYALS.

This sequence belongs to the NAD kinase family. A divalent metal cation serves as cofactor.

The protein localises to the cytoplasm. The enzyme catalyses NAD(+) + ATP = ADP + NADP(+) + H(+). Involved in the regulation of the intracellular balance of NAD and NADP, and is a key enzyme in the biosynthesis of NADP. Catalyzes specifically the phosphorylation on 2'-hydroxyl of the adenosine moiety of NAD to yield NADP. The chain is NAD kinase from Polaromonas sp. (strain JS666 / ATCC BAA-500).